We begin with the raw amino-acid sequence, 554 residues long: Phenylalanine--tRNA ligase beta subunit (554 aa).

The B5 domain maps to 276–351; it reads LSLKSRMISV…INYGYEKFEG (76 aa). The Mg(2+) site is built by aspartate 329, aspartate 335, glutamate 338, and glutamate 339.

The protein belongs to the phenylalanyl-tRNA synthetase beta subunit family. Type 2 subfamily. As to quaternary structure, tetramer of two alpha and two beta subunits. Requires Mg(2+) as cofactor.

It is found in the cytoplasm. It carries out the reaction tRNA(Phe) + L-phenylalanine + ATP = L-phenylalanyl-tRNA(Phe) + AMP + diphosphate + H(+). The chain is Phenylalanine--tRNA ligase beta subunit from Methanococcus maripaludis (strain C5 / ATCC BAA-1333).